The primary structure comprises 739 residues: Phosphoribosylformylglycinamidine synthase subunit PurL (739 aa).

Residue histidine 54 is part of the active site. 2 residues coordinate ATP: tyrosine 57 and lysine 96. Residue glutamate 98 participates in Mg(2+) binding. Substrate is bound by residues 99–102 (SHNH) and arginine 121. The active-site Proton acceptor is the histidine 100. Aspartate 122 contributes to the Mg(2+) binding site. Glutamine 245 lines the substrate pocket. Aspartate 273 lines the Mg(2+) pocket. 317-319 (ESQ) is a substrate binding site. Residues aspartate 500 and glycine 537 each coordinate ATP. Position 538 (asparagine 538) interacts with Mg(2+). Position 540 (serine 540) interacts with substrate.

It belongs to the FGAMS family. Monomer. Part of the FGAM synthase complex composed of 1 PurL, 1 PurQ and 2 PurS subunits.

It is found in the cytoplasm. The enzyme catalyses N(2)-formyl-N(1)-(5-phospho-beta-D-ribosyl)glycinamide + L-glutamine + ATP + H2O = 2-formamido-N(1)-(5-O-phospho-beta-D-ribosyl)acetamidine + L-glutamate + ADP + phosphate + H(+). It participates in purine metabolism; IMP biosynthesis via de novo pathway; 5-amino-1-(5-phospho-D-ribosyl)imidazole from N(2)-formyl-N(1)-(5-phospho-D-ribosyl)glycinamide: step 1/2. Its function is as follows. Part of the phosphoribosylformylglycinamidine synthase complex involved in the purines biosynthetic pathway. Catalyzes the ATP-dependent conversion of formylglycinamide ribonucleotide (FGAR) and glutamine to yield formylglycinamidine ribonucleotide (FGAM) and glutamate. The FGAM synthase complex is composed of three subunits. PurQ produces an ammonia molecule by converting glutamine to glutamate. PurL transfers the ammonia molecule to FGAR to form FGAM in an ATP-dependent manner. PurS interacts with PurQ and PurL and is thought to assist in the transfer of the ammonia molecule from PurQ to PurL. This Exiguobacterium sp. (strain ATCC BAA-1283 / AT1b) protein is Phosphoribosylformylglycinamidine synthase subunit PurL.